Here is a 511-residue protein sequence, read N- to C-terminus: Ulvan-active sulfatase (511 aa).

The signal sequence occupies residues 1–34 (MNFKQNIVYKKMAISMKITAIRPIALVISFTLLS). Cysteine 35 carries the N-palmitoyl cysteine lipid modification. Cysteine 35 is lipidated: S-diacylglycerol cysteine. 2 residues coordinate Ca(2+): aspartate 59 and cysteine 99. Catalysis depends on cysteine 99, which acts as the Nucleophile. Cysteine 99 bears the 3-oxoalanine (Cys) mark. The active site involves histidine 149. Residue aspartate 305 coordinates Ca(2+).

This sequence belongs to the sulfatase family. Ca(2+) is required as a cofactor. Post-translationally, the conversion to 3-oxoalanine (also known as C-formylglycine, FGly), of a serine or cysteine residue in prokaryotes and of a cysteine residue in eukaryotes, is critical for catalytic activity. This post-translational modification is severely defective in multiple sulfatase deficiency (MSD).

Its subcellular location is the cell membrane. Its function is as follows. Sulfatase involved in ulvan degradation. Ulvan is the main polysaccharide component of the Ulvales (green seaweed) cell wall. It is composed of disaccharide building blocks comprising 3-sulfated rhamnose (Rha3S) linked to D-glucuronic acid (GlcA), L-iduronic acid (IduA), or D-xylose (Xyl). This is Ulvan-active sulfatase from Formosa agariphila (strain DSM 15362 / KCTC 12365 / LMG 23005 / KMM 3901 / M-2Alg 35-1).